The sequence spans 1207 residues: ATP-dependent helicase/nuclease subunit A (1207 aa).

Residues Pro-2 to Thr-472 enclose the UvrD-like helicase ATP-binding domain. Ala-23–Thr-30 is a binding site for ATP. Positions Gly-492–Gly-783 constitute a UvrD-like helicase C-terminal domain.

Belongs to the helicase family. AddA subfamily. As to quaternary structure, heterodimer of AddA and AddB/RexB. Requires Mg(2+) as cofactor.

The enzyme catalyses Couples ATP hydrolysis with the unwinding of duplex DNA by translocating in the 3'-5' direction.. It catalyses the reaction ATP + H2O = ADP + phosphate + H(+). Functionally, the heterodimer acts as both an ATP-dependent DNA helicase and an ATP-dependent, dual-direction single-stranded exonuclease. Recognizes the chi site generating a DNA molecule suitable for the initiation of homologous recombination. The AddA nuclease domain is required for chi fragment generation; this subunit has the helicase and 3' -&gt; 5' nuclease activities. This chain is ATP-dependent helicase/nuclease subunit A, found in Lactobacillus acidophilus (strain ATCC 700396 / NCK56 / N2 / NCFM).